A 555-amino-acid polypeptide reads, in one-letter code: 2-succinyl-5-enolpyruvyl-6-hydroxy-3-cyclohexene-1-carboxylate synthase (555 aa).

This sequence belongs to the TPP enzyme family. MenD subfamily. In terms of assembly, homodimer. Mg(2+) is required as a cofactor. It depends on Mn(2+) as a cofactor. Requires thiamine diphosphate as cofactor.

It catalyses the reaction isochorismate + 2-oxoglutarate + H(+) = 5-enolpyruvoyl-6-hydroxy-2-succinyl-cyclohex-3-ene-1-carboxylate + CO2. It participates in quinol/quinone metabolism; 1,4-dihydroxy-2-naphthoate biosynthesis; 1,4-dihydroxy-2-naphthoate from chorismate: step 2/7. The protein operates within quinol/quinone metabolism; menaquinone biosynthesis. Functionally, catalyzes the thiamine diphosphate-dependent decarboxylation of 2-oxoglutarate and the subsequent addition of the resulting succinic semialdehyde-thiamine pyrophosphate anion to isochorismate to yield 2-succinyl-5-enolpyruvyl-6-hydroxy-3-cyclohexene-1-carboxylate (SEPHCHC). The protein is 2-succinyl-5-enolpyruvyl-6-hydroxy-3-cyclohexene-1-carboxylate synthase of Kineococcus radiotolerans (strain ATCC BAA-149 / DSM 14245 / SRS30216).